The primary structure comprises 541 residues: 2-succinyl-5-enolpyruvyl-6-hydroxy-3-cyclohexene-1-carboxylate synthase (541 aa).

This sequence belongs to the TPP enzyme family. MenD subfamily. In terms of assembly, homodimer. It depends on Mg(2+) as a cofactor. Mn(2+) is required as a cofactor. The cofactor is thiamine diphosphate.

It catalyses the reaction isochorismate + 2-oxoglutarate + H(+) = 5-enolpyruvoyl-6-hydroxy-2-succinyl-cyclohex-3-ene-1-carboxylate + CO2. The protein operates within quinol/quinone metabolism; 1,4-dihydroxy-2-naphthoate biosynthesis; 1,4-dihydroxy-2-naphthoate from chorismate: step 2/7. It functions in the pathway quinol/quinone metabolism; menaquinone biosynthesis. Functionally, catalyzes the thiamine diphosphate-dependent decarboxylation of 2-oxoglutarate and the subsequent addition of the resulting succinic semialdehyde-thiamine pyrophosphate anion to isochorismate to yield 2-succinyl-5-enolpyruvyl-6-hydroxy-3-cyclohexene-1-carboxylate (SEPHCHC). This Leuconostoc citreum (strain KM20) protein is 2-succinyl-5-enolpyruvyl-6-hydroxy-3-cyclohexene-1-carboxylate synthase.